We begin with the raw amino-acid sequence, 379 residues long: MPAQTHISKLTLTNFRNYAALAIDLAPGAVVFSGDNGAGKTNLLEAISLLTPGRGLRRAPYADVAREGGDGGFALHARLDGPDGQVEIGTGISVGEGEGGRRVRINGATARSAEDMLEWLRVVWLTPAMDALFTGPAADRRRFLDRLVLAIDPGHGQRALDYEKAMRGRNRLLTDGSRDDRWFEAIETQMAETGVAIAAARAELVRLLAAMIDRLPDTGPFPQADISLSGDLEAEVSSAPAVDVEERFRRALAGGRDRDRAAGRTLEGPHRSDLLVRHRPKAMPAELCSTGEQKALLVGIVLSHARLTGEMSGMTPILLLDEIAAHLDGGRRAALFSILEELNCQAFMTGTDAALFSSLMGRAQFLTVDHGTVGPTEDA.

ATP is bound at residue 34 to 41; the sequence is GDNGAGKT.

The protein belongs to the RecF family.

It localises to the cytoplasm. The RecF protein is involved in DNA metabolism; it is required for DNA replication and normal SOS inducibility. RecF binds preferentially to single-stranded, linear DNA. It also seems to bind ATP. This is DNA replication and repair protein RecF from Mesorhizobium japonicum (strain LMG 29417 / CECT 9101 / MAFF 303099) (Mesorhizobium loti (strain MAFF 303099)).